Consider the following 145-residue polypeptide: 3-hydroxyacyl-[acyl-carrier-protein] dehydratase FabZ (145 aa).

Residue His49 is part of the active site.

The protein belongs to the thioester dehydratase family. FabZ subfamily.

It is found in the cytoplasm. It catalyses the reaction a (3R)-hydroxyacyl-[ACP] = a (2E)-enoyl-[ACP] + H2O. In terms of biological role, involved in unsaturated fatty acids biosynthesis. Catalyzes the dehydration of short chain beta-hydroxyacyl-ACPs and long chain saturated and unsaturated beta-hydroxyacyl-ACPs. In Rickettsia felis (strain ATCC VR-1525 / URRWXCal2) (Rickettsia azadi), this protein is 3-hydroxyacyl-[acyl-carrier-protein] dehydratase FabZ.